The following is a 222-amino-acid chain: 23kDa protein (222 aa).

Residues 1-12 (MEPHDQSGSTTR) show a composition bias toward polar residues. The interval 1 to 21 (MEPHDQSGSTTRQLDEIRDRR) is disordered.

May act as a regulatory factor during viral transcription. The sequence is that of 23kDa protein from Indian citrus ringspot virus (isolate Kinnow mandarin/India/K1/1996) (ICRSV).